Consider the following 454-residue polypeptide: Na(+)/H(+) antiporter NhaA (454 aa).

10 helical membrane-spanning segments follow: residues isoleucine 22–phenylalanine 42, methionine 64–leucine 84, leucine 106–phenylalanine 126, glycine 150–alanine 170, leucine 190–leucine 210, valine 228–glycine 248, proline 284–glutamate 304, leucine 306–glycine 326, methionine 355–leucine 375, and alanine 386–serine 406.

Belongs to the NhaA Na(+)/H(+) (TC 2.A.33) antiporter family.

The protein localises to the cell membrane. It carries out the reaction Na(+)(in) + 2 H(+)(out) = Na(+)(out) + 2 H(+)(in). Na(+)/H(+) antiporter that extrudes sodium in exchange for external protons. In Bifidobacterium adolescentis (strain ATCC 15703 / DSM 20083 / NCTC 11814 / E194a), this protein is Na(+)/H(+) antiporter NhaA.